A 148-amino-acid polypeptide reads, in one-letter code: Large ribosomal subunit protein uL11 (148 aa).

The protein belongs to the universal ribosomal protein uL11 family. As to quaternary structure, part of the ribosomal stalk of the 50S ribosomal subunit. Interacts with L10 and the large rRNA to form the base of the stalk. L10 forms an elongated spine to which L12 dimers bind in a sequential fashion forming a multimeric L10(L12)X complex. Post-translationally, one or more lysine residues are methylated.

In terms of biological role, forms part of the ribosomal stalk which helps the ribosome interact with GTP-bound translation factors. The sequence is that of Large ribosomal subunit protein uL11 from Myxococcus xanthus (strain DK1622).